The following is a 309-amino-acid chain: Beta-lactamase (309 aa).

The N-terminal stretch at 1–28 (MMILKNKRMLKIGICVGILGLSITSLEA) is a signal peptide. S92 functions as the Acyl-ester intermediate in the catalytic mechanism. Catalysis depends on E188, which acts as the Proton acceptor. 254–256 (KSG) contacts substrate.

Belongs to the class-A beta-lactamase family.

The catalysed reaction is a beta-lactam + H2O = a substituted beta-amino acid. This protein is a beta-lactamase with a substrate specificity for penicillins. In Bacillus thuringiensis, this protein is Beta-lactamase (bla).